The sequence spans 291 residues: Lys-63-specific deubiquitinase BRCC36-like (291 aa).

Positions 12–179 (VYLESDAFLV…YTCFQSVQAS (168 aa)) constitute an MPN domain. Residues histidine 122, histidine 124, and aspartate 135 each coordinate Zn(2+). The JAMM motif motif lies at 122–135 (HSHPHITVWPSHVD). Residues 259 to 286 (LQWLEDRLEQNQQRLQELEQEKEDLMEE) adopt a coiled-coil conformation.

This sequence belongs to the peptidase M67A family. BRCC36 subfamily.

Functionally, metalloprotease that specifically cleaves 'Lys-63'-linked polyubiquitin chains. The chain is Lys-63-specific deubiquitinase BRCC36-like from Mus musculus (Mouse).